Reading from the N-terminus, the 104-residue chain is Large ribosomal subunit protein bL21 (104 aa).

This sequence belongs to the bacterial ribosomal protein bL21 family. In terms of assembly, part of the 50S ribosomal subunit. Contacts protein L20.

This protein binds to 23S rRNA in the presence of protein L20. This is Large ribosomal subunit protein bL21 from Granulibacter bethesdensis (strain ATCC BAA-1260 / CGDNIH1).